The primary structure comprises 755 residues: Lysosome membrane protein 2-B (755 aa).

Residues 1 to 6 are Cytoplasmic-facing; it reads MKHIGR. The helical transmembrane segment at 7–27 threads the bilayer; it reads IVSFPIGLVLIAVGIIIFVVV. Residues Asn-28, Asn-76, Asn-379, Asn-465, Asn-497, Asn-588, Asn-607, and Asn-680 are each glycosylated (N-linked (GlcNAc...) asparagine). Residues 28 to 727 are Lumenal-facing; it reads NRTIKDEFKK…AYKVDSFRYA (700 aa). Residues 728-748 form a helical membrane-spanning segment; the sequence is ITVILIVVGGFLSLISGGLFV. Residues 749-755 lie on the Cytoplasmic side of the membrane; sequence LDKIIDL. The Di-leucine motif motif lies at 752 to 753; it reads II.

The protein belongs to the CD36 family. In terms of processing, heavily glycosylated.

It is found in the lysosome membrane. Functionally, may act as a lysosomal receptor. May be involved in macropinocytosis and fluid phase exocytosis. The protein is Lysosome membrane protein 2-B (lmpB) of Dictyostelium discoideum (Social amoeba).